The following is a 243-amino-acid chain: Adenosylcobinamide-GDP ribazoletransferase (243 aa).

A run of 5 helical transmembrane segments spans residues 31-51 (LLFY…FSAL), 57-77 (LMLH…GLHL), 109-129 (IAVV…LALI), 135-155 (IGLL…FLGT), and 188-208 (VLLA…CFFW).

The protein belongs to the CobS family. Mg(2+) serves as cofactor.

Its subcellular location is the cell inner membrane. The catalysed reaction is alpha-ribazole + adenosylcob(III)inamide-GDP = adenosylcob(III)alamin + GMP + H(+). The enzyme catalyses alpha-ribazole 5'-phosphate + adenosylcob(III)inamide-GDP = adenosylcob(III)alamin 5'-phosphate + GMP + H(+). It functions in the pathway cofactor biosynthesis; adenosylcobalamin biosynthesis; adenosylcobalamin from cob(II)yrinate a,c-diamide: step 7/7. Its function is as follows. Joins adenosylcobinamide-GDP and alpha-ribazole to generate adenosylcobalamin (Ado-cobalamin). Also synthesizes adenosylcobalamin 5'-phosphate from adenosylcobinamide-GDP and alpha-ribazole 5'-phosphate. In Pseudomonas savastanoi pv. phaseolicola (strain 1448A / Race 6) (Pseudomonas syringae pv. phaseolicola (strain 1448A / Race 6)), this protein is Adenosylcobinamide-GDP ribazoletransferase.